A 58-amino-acid polypeptide reads, in one-letter code: MAQKKKSSGSGLMSSAGLMTYYDADKKAIHVQPKTVFIFGAICGIVILAFSAGFGLWP.

At 1–32 (MAQKKKSSGSGLMSSAGLMTYYDADKKAIHVQ) the chain is on the cytoplasmic side. The chain crosses the membrane as a helical span at residues 33–54 (PKTVFIFGAICGIVILAFSAGF). Over 55 to 58 (GLWP) the chain is Extracellular.

This sequence belongs to the SEC61-beta family. In terms of assembly, component of the protein translocase complex. Heterotrimer consisting of alpha (SecY), beta (SecG) and gamma (SecE) subunits. Can form oligomers of the heterotrimer.

Its subcellular location is the cell membrane. In terms of biological role, involved in protein export. The function of the beta subunit is unknown, but it may be involved in stabilization of the trimeric complex. This chain is Preprotein translocase subunit SecG, found in Methanococcoides burtonii (strain DSM 6242 / NBRC 107633 / OCM 468 / ACE-M).